A 376-amino-acid chain; its full sequence is uncharacterized protein (376 aa).

This sequence belongs to the YCR102c/YLR460c/YNL134c family.

This is an uncharacterized protein from Saccharomyces cerevisiae (strain ATCC 204508 / S288c) (Baker's yeast).